The chain runs to 188 residues: MTEYKLVVVGAGGVGKSALTIQLIQNHFVDEYDPTIEDSYRKQVVIDGETCLLDILDTAGQEEYSAMRDQYMRTGEGFLCVFAINNTKSFEDIHHYREQIKRVKDSEDVPMVLVGNKCDLPTRTVDTKQAQDLARSFGIPFIETSAKTRQGVDDAFYTLVREIRKHKEKMSKEGKKKKKKSKTKCILM.

GTP-binding positions include 10-18 (GAGGVGKSA), 29-35 (VDEYDPT), 59-60 (AG), and 116-119 (NKCD). An Effector region motif is present at residues 32–40 (YDPTIEDSY). Residues 167–188 (KEKMSKEGKKKKKKSKTKCILM) form a disordered region. Cys185 bears the Cysteine methyl ester mark. Cys185 carries the S-farnesyl cysteine lipid modification. A propeptide spans 186-188 (ILM) (removed in mature form).

This sequence belongs to the small GTPase superfamily. Ras family.

It is found in the cell membrane. It localises to the cytoplasm. It catalyses the reaction GTP + H2O = GDP + phosphate + H(+). Alternates between an inactive form bound to GDP and an active form bound to GTP. Activated by a guanine nucleotide-exchange factor (GEF) and inactivated by a GTPase-activating protein (GAP). In terms of biological role, ras proteins bind GDP/GTP and possess intrinsic GTPase activity. Plays an important role in the regulation of cell proliferation. This chain is GTPase KRas (kras1), found in Oryzias latipes (Japanese rice fish).